We begin with the raw amino-acid sequence, 770 residues long: Signal transducer and activator of transcription 3 (770 aa).

An N-acetylalanine modification is found at Ala2. Lys49 and Lys87 each carry N6-acetyllysine. An Essential for nuclear import motif is present at residues 150–162 (DVRKRVQDLEQKM). The SH2 domain occupies 580 to 670 (WNEGYIMGFI…DATNILVSPL (91 aa)). Allysine; alternate is present on residues Lys601, Lys615, and Lys631. An N6-acetyllysine; alternate mark is found at Lys601, Lys615, and Lys631. Tyr640 is subject to Phosphotyrosine; by TYK2. Residue Lys685 is modified to Allysine; alternate. Lys685 bears the N6-acetyllysine; alternate mark. The residue at position 705 (Tyr705) is a Phosphotyrosine; by FER and PTK6. Lys707 carries the N6-acetyllysine modification. Position 714 is a phosphothreonine (Thr714). Position 727 is a phosphoserine; by DYRK2, NLK, NEK6, IRAK1, RPS6KA5, ZIPK/DAPK3 and PKC/PRKCE (Ser727).

Belongs to the transcription factor STAT family. As to quaternary structure, forms a homodimer or a heterodimer with a related family member (at least STAT1). Component of a promoter-binding complex composed of STAT3, NFATC3 and NFATC4; complex formation is enhanced by calcineurin. Interacts with IL31RA, NCOA1, PELP1, SIPAR, SOCS7, STATIP1 and TMF1. Interacts with IL23R in presence of IL23. Interacts (via SH2 domain) with NLK. Interacts with ARL2BP; the interaction is enhanced by LIF and JAK1 expression. Interacts with KPNA4 and KPNA5; KPNA4 may be the primary mediator of nuclear import. Interacts with CAV2; the interaction is increased on insulin-induced tyrosine phosphorylation of CAV2 and leads to STAT3 activation. Interacts with ARL2BP; interaction is enhanced with ARL2. Interacts with NEK6. Binds to CDK9 when activated and nuclear. Interacts with BMX. Interacts with ZIPK/DAPK3. Interacts with PIAS3; the interaction occurs on stimulation by IL6, CNTF or OSM and inhibits the DNA binding activity of STAT3. In prostate cancer cells, interacts with PRKCE and promotes DNA binding activity of STAT3. Interacts with STMN3, antagonizing its microtubule-destabilizing activity. Interacts with the 'Lys-129' acetylated form of BIRC5/survivin. Interacts with FER. Interacts (via SH2 domain) with EIF2AK2/PKR (via the kinase catalytic domain). Interacts with FGFR4. Interacts with INPP5F; the interaction is independent of STAT3 Tyr-705 phosphorylation status. Interacts with OCIAD1. Interacts with OCIAD2. Interacts (unphosphorylated or phosphorylated at Ser-727) with PHB1. Interacts and may form heterodimers with NHLH1. Found in a complex with SLC39A6, SLC39A10 and with the 'Ser-727' phosphorylated form of STAT3 throughout mitosis. Interacts (when acetylated) with EP300 (via bromo domain); interaction takes place following STAT3 acetylation by EP300 and promotes enhanceosome assembly. Interacts (when acetylated) with BRD2 (via bromo domain); interaction promotes STAT3 recruitment to chromatin and T-helper Th17 cell differentiation. Interacts with FAM220A/SIPAR; the interaction occurs in both the nucleus and the cytoplasm, is enhanced by IL6 and promotes STAT3 dephosphorylation. Interacts in both unphosphorylated and phosphorylated forms with FAM220A but interacts preferentially in the phosphorylated form in the nucleus. Interacts with PTPN2; the interaction is promoted by FAM220A and leads to STAT3 dephosphorylation which negatively regulates STAT3 transcriptional activator activity. Post-translationally, activated through tyrosine phosphorylation by BMX. Tyrosine phosphorylated in response to IL6, IL11, CNTF, LIF, KITLG/SCF, CSF1, EGF, PDGF, IFN-alpha, LEP and OSM. Activated KIT promotes phosphorylation on tyrosine residues and subsequent translocation to the nucleus. Tyrosine phosphorylated in response to constitutively activated FGFR1, FGFR2, FGFR3 and FGFR4. Phosphorylated on serine upon DNA damage, probably by ATM or ATR. Serine phosphorylation is important for the formation of stable DNA-binding STAT3 homodimers and maximal transcriptional activity. ARL2BP may participate in keeping the phosphorylated state of STAT3 within the nucleus. Tyrosine phosphorylated upon stimulation with EGF. Upon LPS challenge, phosphorylated within the nucleus by IRAK1. Upon UV-A treatment, phosphorylated on Ser-727 by RPS6KA5. Dephosphorylation on tyrosine residues by PTPN2 negatively regulates IL6/interleukin-6 signaling. Phosphorylation at Tyr-705 by PTK6, isoform M2 of PKM (PKM2) or FER leads to an increase of its transcriptional activity. Phosphorylation at Tyr-705 is increased in the presence of calcineurin. Phosphorylation at Tyr-640 by TYK2 negatively regulates transcriptional activity. Acetylated on lysine residues by EP300/p300, promoting its activation. Acetylation at Lys-49 and Lys-87 by EP300/p300 promotes its activation. Acetylation at Lys-87 by EP300/p300 promotes its association with BRD2 and recruitment to chromatin. Deacetylated at Lys-49 and Lys-87 by HDAC1. Acetylation at Lys-685 by EP300/p300 promotes its homodimerization and activation. Deacetylated at Lys-685 by HDAC3. Acetylated on lysine residues by CREBBP. Deacetylation by LOXL3 leads to disrupt STAT3 dimerization and inhibit STAT3 transcription activity. Oxidation of lysine residues to allysine on STAT3 preferentially takes place on lysine residues that are acetylated. In terms of processing, some lysine residues are oxidized to allysine by LOXL3, leading to disrupt STAT3 dimerization and inhibit STAT3 transcription activity. Oxidation of lysine residues to allysine on STAT3 preferentially takes place on lysine residues that are acetylated. Post-translationally, (Microbial infection) Phosphorylated on Tyr-705 in the presence of S.typhimurium SarA. Expressed in ventricular cardiomyocytes (at protein level). Expressed in the lung (at protein level). Expressed in the liver, spleen and kidney. As to expression, expressed in the liver.

Its subcellular location is the cytoplasm. It is found in the nucleus. Signal transducer and transcription activator that mediates cellular responses to interleukins, KITLG/SCF, LEP and other growth factors. Once activated, recruits coactivators, such as NCOA1 or MED1, to the promoter region of the target gene. May mediate cellular responses to activated FGFR1, FGFR2, FGFR3 and FGFR4. Upon activation of IL6ST/gp130 signaling by interleukin-6 (IL6), binds to the IL6-responsive elements identified in the promoters of various acute-phase protein genes. Activated by IL31 through IL31RA. Acts as a regulator of inflammatory response by regulating differentiation of naive CD4(+) T-cells into T-helper Th17 or regulatory T-cells (Treg): acetylation promotes its transcription activity and cell differentiation while deacetylation and oxidation of lysine residues by LOXL3 inhibits differentiation. Involved in cell cycle regulation by inducing the expression of key genes for the progression from G1 to S phase, such as CCND1. Mediates the effects of LEP on melanocortin production, body energy homeostasis and lactation. May play an apoptotic role by transctivating BIRC5 expression under LEP activation. Cytoplasmic STAT3 represses macroautophagy by inhibiting EIF2AK2/PKR activity. Plays a crucial role in basal beta cell functions, such as regulation of insulin secretion. Following JAK/STAT signaling activation and as part of a complex with NFATC3 and NFATC4, binds to the alpha-beta E4 promoter region of CRYAB and activates transcription in cardiomyocytes. Plays an important role in host defense in methicillin-resistant S.aureus lung infection by regulating the expression of the antimicrobial lectin REG3G. This chain is Signal transducer and activator of transcription 3, found in Mus musculus (Mouse).